The chain runs to 414 residues: MTIKTLALQCRDAAQVVSQLSAQAKHALLEAMAAALETDAAAILAANARDLEAARAKGTGSAMLDRLALDDKRMAGIAAALREVAQLPDPVGQITRQEVRPNGIRVQKMRVPLGVIAMIYEARPNVTADAAALCIKAGNGVILRGGSEAIHSNTAIARALQGALREANVPEAALTLVEDLRRETMLELLQLNDIVDLAIPRGGEGLIRFVAEHARVPVIKHYKGVCHLFVDASADLALALRLLIDGKATRPAACNSLETLLVHADIAERFLPLAAQALRERKVELRGDAATRAVLPEIAPASDDDYAAEFLDLILAIRVVPDLDTALAHIRQHGSDHTEVIATQDADNAERFVQALRSAVVMVNASSRFSDGGELGLGAEIGISTTRLHSYGPMGLEALTVERFVVRGEGQVRH.

This sequence belongs to the gamma-glutamyl phosphate reductase family.

The protein resides in the cytoplasm. The enzyme catalyses L-glutamate 5-semialdehyde + phosphate + NADP(+) = L-glutamyl 5-phosphate + NADPH + H(+). The protein operates within amino-acid biosynthesis; L-proline biosynthesis; L-glutamate 5-semialdehyde from L-glutamate: step 2/2. Its function is as follows. Catalyzes the NADPH-dependent reduction of L-glutamate 5-phosphate into L-glutamate 5-semialdehyde and phosphate. The product spontaneously undergoes cyclization to form 1-pyrroline-5-carboxylate. This chain is Gamma-glutamyl phosphate reductase, found in Xanthomonas axonopodis pv. citri (strain 306).